We begin with the raw amino-acid sequence, 367 residues long: Leu/Ile/Val-binding protein (367 aa).

A signal peptide spans 1-23; it reads MNIKGKALLAGCIALAFSNMALA. Cysteines 76 and 101 form a disulfide.

This sequence belongs to the leucine-binding protein family.

The protein resides in the periplasm. Functionally, this protein is a component of the leucine, isoleucine, valine, (threonine) transport system, which is one of the two periplasmic binding protein-dependent transport systems of the high-affinity transport of the branched-chain amino acids. The polypeptide is Leu/Ile/Val-binding protein (livJ) (Escherichia coli O157:H7).